A 355-amino-acid chain; its full sequence is Fructose-bisphosphate aldolase, cytoplasmic isozyme (355 aa).

Residues Arg-52 and Lys-142 each coordinate substrate. The active-site Proton acceptor is Glu-183. Residue Lys-225 is the Schiff-base intermediate with dihydroxyacetone-P of the active site.

Belongs to the class I fructose-bisphosphate aldolase family.

The protein localises to the cytoplasm. The catalysed reaction is beta-D-fructose 1,6-bisphosphate = D-glyceraldehyde 3-phosphate + dihydroxyacetone phosphate. It participates in carbohydrate degradation; glycolysis; D-glyceraldehyde 3-phosphate and glycerone phosphate from D-glucose: step 4/4. This Zea mays (Maize) protein is Fructose-bisphosphate aldolase, cytoplasmic isozyme.